A 329-amino-acid polypeptide reads, in one-letter code: Thioredoxin-like fold domain-containing protein MRL7L homolog, chloroplastic (329 aa).

The N-terminal 46 residues, 1-46 (MALQSCCSSSASVPATCSALCLAEATRAASLFVRPRAAARRLVLAR), are a transit peptide targeting the chloroplast. The disordered stretch occupies residues 58–91 (AVQLVLGGRARDDGSESESSDDEDDDEPMQMTDE). The segment covering 72-85 (SESESSDDEDDDEP) has biased composition (acidic residues).

Its subcellular location is the plastid. It localises to the chloroplast stroma. Plays an essential role in early steps of chloroplast development. Involved in the regulation of plastid gene expression. Required for the proper function of the plastid transcriptional machinery and protein accumulation in thylakoid membranes. May function as molecular chaperone to ensure proper organization of the nucleoids in chloroplasts. This is Thioredoxin-like fold domain-containing protein MRL7L homolog, chloroplastic from Oryza sativa subsp. japonica (Rice).